Reading from the N-terminus, the 267-residue chain is Small ribosomal subunit protein mS23 (267 aa).

Residues 230–267 (VKTASKDGKSSNGSMGAEDVVEKTTSAWETEFVEEESS) are disordered.

The protein belongs to the mitochondrion-specific ribosomal protein mS23 family. In terms of assembly, component of the mitochondrial small ribosomal subunit.

Its subcellular location is the mitochondrion. The sequence is that of Small ribosomal subunit protein mS23 (RSM25) from Meyerozyma guilliermondii (strain ATCC 6260 / CBS 566 / DSM 6381 / JCM 1539 / NBRC 10279 / NRRL Y-324) (Yeast).